The chain runs to 182 residues: Large ribosomal subunit protein uL5 (182 aa).

This sequence belongs to the universal ribosomal protein uL5 family. In terms of assembly, part of the 50S ribosomal subunit; part of the 5S rRNA/L5/L18/L25 subcomplex. Contacts the 5S rRNA and the P site tRNA. Forms a bridge to the 30S subunit in the 70S ribosome.

Functionally, this is one of the proteins that bind and probably mediate the attachment of the 5S RNA into the large ribosomal subunit, where it forms part of the central protuberance. In the 70S ribosome it contacts protein S13 of the 30S subunit (bridge B1b), connecting the 2 subunits; this bridge is implicated in subunit movement. Contacts the P site tRNA; the 5S rRNA and some of its associated proteins might help stabilize positioning of ribosome-bound tRNAs. The protein is Large ribosomal subunit protein uL5 of Borrelia garinii subsp. bavariensis (strain ATCC BAA-2496 / DSM 23469 / PBi) (Borreliella bavariensis).